We begin with the raw amino-acid sequence, 53 residues long: ATP synthase protein 8 (53 aa).

The chain crosses the membrane as a helical span at residues 9 to 29 (WIFFLFFFICIFLIFNIMNYF).

The protein belongs to the ATPase protein 8 family. In terms of assembly, F-type ATPases have 2 components, CF(1) - the catalytic core - and CF(0) - the membrane proton channel.

The protein resides in the mitochondrion membrane. Functionally, mitochondrial membrane ATP synthase (F(1)F(0) ATP synthase or Complex V) produces ATP from ADP in the presence of a proton gradient across the membrane which is generated by electron transport complexes of the respiratory chain. F-type ATPases consist of two structural domains, F(1) - containing the extramembraneous catalytic core and F(0) - containing the membrane proton channel, linked together by a central stalk and a peripheral stalk. During catalysis, ATP synthesis in the catalytic domain of F(1) is coupled via a rotary mechanism of the central stalk subunits to proton translocation. Part of the complex F(0) domain. Minor subunit located with subunit a in the membrane. This is ATP synthase protein 8 (mt:ATPase8) from Bombyx mori (Silk moth).